The chain runs to 102 residues: Co-chaperonin GroES (102 aa).

This sequence belongs to the GroES chaperonin family. As to quaternary structure, heptamer of 7 subunits arranged in a ring. Interacts with the chaperonin GroEL.

It is found in the cytoplasm. Functionally, together with the chaperonin GroEL, plays an essential role in assisting protein folding. The GroEL-GroES system forms a nano-cage that allows encapsulation of the non-native substrate proteins and provides a physical environment optimized to promote and accelerate protein folding. GroES binds to the apical surface of the GroEL ring, thereby capping the opening of the GroEL channel. This is Co-chaperonin GroES from Chlamydia trachomatis serovar D (strain ATCC VR-885 / DSM 19411 / UW-3/Cx).